A 1820-amino-acid chain; its full sequence is Afadin (1820 aa).

In terms of domain architecture, Ras-associating 1 spans 39–133 (FHGVMRFYFQ…GRFVLKNEND (95 aa)). Residues 129–196 (KNENDAIPAK…PSQGDDSENS (68 aa)) are disordered. A coiled-coil region spans residues 146–186 (EKQEKEGVIQNFKRTLSKKEKKEKKKKEKEALRQASDKEER). Residues 160 to 172 (TLSKKEKKEKKKK) are compositionally biased toward basic residues. Positions 173-189 (EKEALRQASDKEERPSQ) are enriched in basic and acidic residues. 3 positions are modified to phosphoserine: Ser216, Ser246, and Ser256. In terms of domain architecture, Ras-associating 2 spans 246–348 (SGGTLRIYAD…LVFQLKRRPP (103 aa)). The span at 356-371 (KKHVEGKSLKGKDRAD) shows a compositional bias: basic and acidic residues. The tract at residues 356 to 377 (KKHVEGKSLKGKDRADGSGYGS) is disordered. Phosphoserine occurs at positions 391 and 424. The region spanning 426–492 (TEVGTEKFDD…LQSGMRLQFG (67 aa)) is the FHA domain. Phosphoserine is present on residues Ser512, Ser557, Ser562, Ser655, Ser1083, Ser1107, Ser1126, Ser1140, Ser1143, Ser1172, Ser1173, Ser1182, and Ser1199. The interval 538–569 (GDVHSGTALPASRSTTRLDSDRVSSASSTAER) is disordered. Residues 653-908 (DISPTERTHK…IENVVAVAEN (256 aa)) enclose the Dilute domain. In terms of domain architecture, PDZ spans 1007–1093 (IITVTLKKQN…VVTLEVAKQG (87 aa)). The segment at 1107-1194 (SPMMQRISDR…GKGPYTSGTA (88 aa)) is disordered. The segment covering 1113-1128 (ISDRRGSGKPRPKSEG) has biased composition (basic and acidic residues). The span at 1132 to 1143 (YNNSAQNGSPES) shows a compositional bias: polar residues. The span at 1152–1172 (SEPKKLPGDDRLMKNRADHRS) shows a compositional bias: basic and acidic residues. Positions 1203–1222 (GNLCTEEQSPPPRPEAYPIP) are disordered. Phosphothreonine is present on Thr1232. Disordered stretches follow at residues 1235 to 1278 (ASKS…SQEE), 1308 to 1527 (QSSS…KQQQ), and 1567 to 1716 (RLQE…LKTQ). Position 1238 is a phosphoserine (Ser1238). Residues 1252-1262 (YEEKPHVHTES) show a composition bias toward basic and acidic residues. Ser1275 bears the Phosphoserine mark. The segment covering 1309–1318 (SSSVESSTSS) has biased composition (low complexity). The segment covering 1325 to 1337 (SSKSVTPASTLTK) has biased composition (polar residues). Phosphoserine is present on Ser1328. Thr1330 carries the post-translational modification Phosphothreonine. Residues 1364 to 1373 (LPPPPPPPPV) are compositionally biased toward pro residues. The segment covering 1407 to 1440 (EWKKREEHQRWYEKEKARLEEERERKRREQERKL) has biased composition (basic and acidic residues). Residues 1410 to 1446 (KREEHQRWYEKEKARLEEERERKRREQERKLGQMRSQ) are a coiled coil. A compositionally biased stretch (polar residues) spans 1443-1457 (MRSQTLNPASFSPLA). Over residues 1487 to 1503 (TIERKDLQYITISKEEL) the composition is skewed to basic and acidic residues. A phosphoserine mark is found at Ser1499 and Ser1510. Over residues 1513-1526 (PWKRDAREKLEKQQ) the composition is skewed to basic and acidic residues. Residues 1523-1561 (EKQQQMHIVDMLSKEIHELQNKVDRTAEESDRLRKLMLE) are a coiled coil. A compositionally biased stretch (acidic residues) spans 1576–1587 (EDDDEEEDDDVD). A coiled-coil region spans residues 1593 to 1665 (QRLEAERRAR…SRLEAERRRQ (73 aa)). Basic and acidic residues predominate over residues 1595–1675 (LEAERRARMQ…HEEAARRLLE (81 aa)). Ser1694, Ser1719, Ser1770, and Ser1795 each carry phosphoserine. Residues 1734-1820 (EEEDYGPAGP…TELENELNTK (87 aa)) are disordered. A compositionally biased stretch (basic and acidic residues) spans 1759–1772 (APREAREKLTRSQD). Residues 1800–1820 (VSDKVKASRKLTELENELNTK) show a composition bias toward basic and acidic residues. Lys1803 is subject to N6-acetyllysine.

In terms of assembly, homodimer. Interacts with F-actin, nectin and NECTIN3. Essential for the association of nectin and E-cadherin. Isoform 2/s-afadin does not interact with F-actin. Interacts with ZO-1 and occludin, but probably in an indirect manner. Interacts with RIT1, RIT2, NRXN1 and BCR. Interacts with ADAM10; the interaction locks ADAM10 at adherens junctions following ADAM10 recruitment to adherens junctions by TSPAN33. As to expression, isoform 1 is expressed only in a restricted set of epithelial structures during early embryogenesis.

It is found in the cell junction. The protein resides in the adherens junction. Functionally, belongs to an adhesion system, probably together with the E-cadherin-catenin system, which plays a role in the organization of homotypic, interneuronal and heterotypic cell-cell adherens junctions (AJs). Nectin- and actin-filament-binding protein that connects nectin to the actin cytoskeleton. May play a key role in the organization of epithelial structures of the embryonic ectoderm. Essential for the organization of adherens junctions. The polypeptide is Afadin (Mus musculus (Mouse)).